The primary structure comprises 61 residues: Sec-independent protein translocase protein TatA (61 aa).

The helical transmembrane segment at 1-21 threads the bilayer; it reads MFSNIGFPGLILILVAVLILF.

The protein belongs to the TatA/E family. Forms a complex with TatC.

It localises to the cell membrane. In terms of biological role, part of the twin-arginine translocation (Tat) system that transports large folded proteins containing a characteristic twin-arginine motif in their signal peptide across membranes. TatA could form the protein-conducting channel of the Tat system. This Bacillus anthracis (strain A0248) protein is Sec-independent protein translocase protein TatA.